A 161-amino-acid polypeptide reads, in one-letter code: 3-isopropylmalate dehydratase small subunit (161 aa).

It belongs to the LeuD family. LeuD type 2 subfamily. As to quaternary structure, heterodimer of LeuC and LeuD.

It catalyses the reaction (2R,3S)-3-isopropylmalate = (2S)-2-isopropylmalate. It participates in amino-acid biosynthesis; L-leucine biosynthesis; L-leucine from 3-methyl-2-oxobutanoate: step 2/4. In terms of biological role, catalyzes the isomerization between 2-isopropylmalate and 3-isopropylmalate, via the formation of 2-isopropylmaleate. The polypeptide is 3-isopropylmalate dehydratase small subunit (Clostridium beijerinckii (strain ATCC 51743 / NCIMB 8052) (Clostridium acetobutylicum)).